A 736-amino-acid chain; its full sequence is MEGEAVEAIVEESETFIKGKERKTYQRRREGGQEEDACHLPQNQTDGGEVVQDVNSSVQMVMMEQLDPTLLQMKTEVMEGTVAPEAEAAVDDTQIITLQVVNMEEQPINIGELQLVQVPVPVTVPVATTSVEELQGAYENEVSKEGLAESEPMICHTLPLPEGFQVVKVGANGEVETLEQGELPPQEDSSWQKDPDYQPPAKKTKKTKKSKLRYTEEGKDVDVSVYDFEEEQQEGLLSEVNAEKVVGNMKPPKPTKIKKKGVKKTFQCELCSYTCPRRSNLDRHMKSHTDERPHKCHLCGRAFRTVTLLRNHLNTHTGTRPHKCPDCDMAFVTSGELVRHRRYKHTHEKPFKCSMCDYASVEVSKLKRHIRSHTGERPFQCSLCSYASRDTYKLKRHMRTHSGEKPYECYICHARFTQSGTMKMHILQKHTENVAKFHCPHCDTVIARKSDLGVHLRKQHSYIEQGKKCRYCDAVFHERYALIQHQKSHKNEKRFKCDQCDYACRQERHMIMHKRTHTGEKPYACSHCDKTFRQKQLLDMHFKRYHDPNFVPAAFVCSKCGKTFTRRNTMARHADNCAGPDGVEGENGGETKKSKRGRKRKMRSKKEDSSDSEENAEPDLDDNEEEEEPAVEIEPEPEPQPQPPPPPQPVAPAPPPAKKRRGRPPGRTNQPKQNQPTAIIQVEDQNTGAIENIIVEVKKEPDAEPAEGEEEEAQAATTDAPNGDLTPEMILSMMDR.

Met1 is subject to N-acetylmethionine. Lys18 participates in a covalent cross-link: Glycyl lysine isopeptide (Lys-Gly) (interchain with G-Cter in SUMO2). Lys74 participates in a covalent cross-link: Glycyl lysine isopeptide (Lys-Gly) (interchain with G-Cter in SUMO). The interval 180-211 (QGELPPQEDSSWQKDPDYQPPAKKTKKTKKSK) is disordered. Over residues 202–211 (KKTKKTKKSK) the composition is skewed to basic residues. Lys219 is covalently cross-linked (Glycyl lysine isopeptide (Lys-Gly) (interchain with G-Cter in SUMO2)). The C2H2-type 1 zinc-finger motif lies at 266 to 288 (FQCELCSYTCPRRSNLDRHMKSH). Thr289 bears the Phosphothreonine mark. The C2H2-type 2 zinc-finger motif lies at 294 to 316 (HKCHLCGRAFRTVTLLRNHLNTH). The residue at position 317 (Thr317) is a Phosphothreonine. C2H2-type zinc fingers lie at residues 322–345 (HKCPDCDMAFVTSGELVRHRRYKH) and 351–373 (FKCSMCDYASVEVSKLKRHIRSH). Thr374 bears the Phosphothreonine mark. Residues 379-401 (FQCSLCSYASRDTYKLKRHMRTH) form a C2H2-type 5 zinc finger. Ser402 is subject to Phosphoserine. 5 C2H2-type zinc fingers span residues 407–430 (YECYICHARFTQSGTMKMHILQKH), 437–460 (FHCPHCDTVIARKSDLGVHLRKQH), 467–489 (KKCRYCDAVFHERYALIQHQKSH), 495–517 (FKCDQCDYACRQERHMIMHKRTH), and 523–546 (YACSHCDKTFRQKQLLDMHFKRYH). Residues 555-577 (FVCSKCGKTFTRRNTMARHADNC) form a C2H2-type 11; atypical zinc finger. The segment at 573 to 686 (HADNCAGPDG…TAIIQVEDQN (114 aa)) is disordered. Positions 593–604 (KSKRGRKRKMRS) are enriched in basic residues. Residues Ser609, Ser610, and Ser612 each carry the phosphoserine modification. Positions 610–637 (SDSEENAEPDLDDNEEEEEPAVEIEPEP) are enriched in acidic residues. Residues 638–656 (EPQPQPPPPPQPVAPAPPP) show a composition bias toward pro residues. A compositionally biased stretch (polar residues) spans 667-686 (RTNQPKQNQPTAIIQVEDQN). Residue Lys698 forms a Glycyl lysine isopeptide (Lys-Gly) (interchain with G-Cter in SUMO); alternate linkage. Lys698 is covalently cross-linked (Glycyl lysine isopeptide (Lys-Gly) (interchain with G-Cter in SUMO2); alternate). Residues 699–726 (KEPDAEPAEGEEEEAQAATTDAPNGDLT) are disordered. Residues 703–713 (AEPAEGEEEEA) are compositionally biased toward acidic residues.

Belongs to the CTCF zinc-finger protein family. In terms of assembly, interacts with CHD8. Interacts with LLPH. Interacts with CENPE. Interacts with BRD2; promoting BRD2 recruitment to chromatin. Sumoylated on Lys-74 and Lys-698; sumoylation of CTCF contributes to the repressive function of CTCF on the MYC P2 promoter.

It localises to the nucleus. The protein localises to the nucleoplasm. Its subcellular location is the chromosome. The protein resides in the centromere. In terms of biological role, chromatin binding factor that binds to DNA sequence specific sites and regulates the 3D structure of chromatin. Binds together strands of DNA, thus forming chromatin loops, and anchors DNA to cellular structures, such as the nuclear lamina. Defines the boundaries between active and heterochromatic DNA via binding to chromatin insulators, thereby preventing interaction between promoter and nearby enhancers and silencers. Plays a critical role in the epigenetic regulation. Participates in the allele-specific gene expression at the imprinted IGF2/H19 gene locus. On the maternal allele, binding within the H19 imprinting control region (ICR) mediates maternally inherited higher-order chromatin conformation to restrict enhancer access to IGF2. Mediates interchromosomal association between IGF2/H19 and WSB1/NF1 and may direct distant DNA segments to a common transcription factory. Regulates asynchronous replication of IGF2/H19. Plays a critical role in gene silencing over considerable distances in the genome. Preferentially interacts with unmethylated DNA, preventing spreading of CpG methylation and maintaining methylation-free zones. Inversely, binding to target sites is prevented by CpG methylation. Plays an important role in chromatin remodeling. Can dimerize when it is bound to different DNA sequences, mediating long-range chromatin looping. Causes local loss of histone acetylation and gain of histone methylation in the beta-globin locus, without affecting transcription. When bound to chromatin, it provides an anchor point for nucleosomes positioning. Seems to be essential for homologous X-chromosome pairing. May participate with Tsix in establishing a regulatable epigenetic switch for X chromosome inactivation. May play a role in preventing the propagation of stable methylation at the escape genes from X-inactivation. Involved in sister chromatid cohesion. Associates with both centromeres and chromosomal arms during metaphase and required for cohesin localization to CTCF sites. Plays a role in the recruitment of CENPE to the pericentromeric/centromeric regions of the chromosome during mitosis. Acts as a transcriptional repressor binding to promoters of vertebrate MYC gene and BAG1 gene. Also binds to the PLK and PIM1 promoters. Acts as a transcriptional activator of APP. Regulates APOA1/C3/A4/A5 gene cluster and controls MHC class II gene expression. Plays an essential role in oocyte and preimplantation embryo development by activating or repressing transcription. Seems to act as tumor suppressor. In Mus musculus (Mouse), this protein is Transcriptional repressor CTCF (Ctcf).